The chain runs to 937 residues: MORC family CW-type zinc finger protein 4 (937 aa).

The segment at 420 to 472 (KVPDQTWVQCDECLKWRKLPGKIDPSMLPARWFCYYNSHPKYRRCSVPEEQEL) adopts a CW-type zinc-finger fold. Zn(2+)-binding residues include cysteine 429, cysteine 432, cysteine 453, and cysteine 464. The disordered stretch occupies residues 606–637 (PEGENSHDKSSSERSTPPYLFPEYPEASKNTG). A coiled-coil region spans residues 762–876 (KLKNQRELEE…LEMLQKAQVS (115 aa)).

As to expression, expressed at low levels in normal tissues, with highest expression levels in placenta and testis. Expression is significantly increased in subset of diffuse large B-cell lymphomas.

Its subcellular location is the nucleus. Functionally, histone methylation reader which binds to non-methylated (H3K4me0), monomethylated (H3K4me1), dimethylated (H3K4me2) and trimethylated (H3K4me3) 'Lys-4' on histone H3. The order of binding preference is H3K4me3 &gt; H3K4me2 &gt; H3K4me1 &gt; H3K4me0. This chain is MORC family CW-type zinc finger protein 4 (MORC4), found in Homo sapiens (Human).